A 556-amino-acid chain; its full sequence is PPE family protein PPE2 (556 aa).

A PPE region spans residues 8–164 (ASPPEVHSAL…ASYQAVSTAA (157 aa)). The SH3-like stretch occupies residues 201–256 (QKIGYTDFYNNVIQPFINWLTNLPFLQAMFSGFDPWLPSLGNPLTFLSPANIAFAL). The tract at residues 319–340 (LEQTLALLPAALPLLAAPLAPL) is leucine zipper motif. Disordered regions lie at residues 385 to 418 (TPTP…PPVT) and 443 to 556 (GTGV…TRVE). Residues 400–417 (PTPPPGPPPPPVTAPPPV) are compositionally biased toward pro residues. Residues 456 to 471 (AEAPAAAAAPEEQVQP) show a composition bias toward low complexity. Basic residues predominate over residues 472–481 (QRRRRPKIKQ). The Nuclear localization signal signature appears at 473 to 481 (RRRRPKIKQ).

The protein belongs to the mycobacterial PPE family.

It is found in the secreted. It localises to the host cytoplasm. The protein resides in the host nucleus. Functionally, inhibits nitric oxide (NO) production in activated macrophages. Acts by inhibiting expression of the host inducible nitric oxide synthase (iNOS). PPE2 is translocated into the host macrophage nucleus, where it interacts with a GATA-binding site overlapping with the TATA box of NOS2 (iNOS) promoter, and strongly inhibits NOS2 gene transcription. Reduction in NO production in turn facilitates intracellular survival of the bacilli inside the macrophage. In addition, disrupts the assembly of NADPH oxidase complex, which inhibits NADPH oxidase-mediated reactive oxygen species (ROS) generation in macrophages and favors M.tuberculosis survival. Acts by interacting with NCF2, the cytosolic subunit of NADPH oxidase, and preventing translocation of NCF2 and NCF1 to the membrane, which causes a reduction of the functional assembly of NADPH oxidase complex and a decrease in NADPH oxidase activity. This Mycobacterium tuberculosis (strain ATCC 25618 / H37Rv) protein is PPE family protein PPE2 (PPE2).